The chain runs to 343 residues: Phenylalanine--tRNA ligase alpha subunit (343 aa).

Glutamate 268 serves as a coordination point for Mg(2+).

The protein belongs to the class-II aminoacyl-tRNA synthetase family. Phe-tRNA synthetase alpha subunit type 1 subfamily. As to quaternary structure, tetramer of two alpha and two beta subunits. Mg(2+) serves as cofactor.

The protein resides in the cytoplasm. It carries out the reaction tRNA(Phe) + L-phenylalanine + ATP = L-phenylalanyl-tRNA(Phe) + AMP + diphosphate + H(+). This chain is Phenylalanine--tRNA ligase alpha subunit, found in Cupriavidus necator (strain ATCC 17699 / DSM 428 / KCTC 22496 / NCIMB 10442 / H16 / Stanier 337) (Ralstonia eutropha).